Here is a 63-residue protein sequence, read N- to C-terminus: Large ribosomal subunit protein uL29 (63 aa).

The protein belongs to the universal ribosomal protein uL29 family.

The sequence is that of Large ribosomal subunit protein uL29 from Photorhabdus laumondii subsp. laumondii (strain DSM 15139 / CIP 105565 / TT01) (Photorhabdus luminescens subsp. laumondii).